The chain runs to 123 residues: MAETEKMKYGSLNRFAQAVTGLFLLFFLGVHLYVAHIDFGHPVAFFSSVINQLHNPWWLAFFLIFVYIITYHGINGLNHIVADTSISEKAKRNIGIALMVIYVITIIYGTILALLVARMTVPT.

Topologically, residues 1–13 (MAETEKMKYGSLN) are cytoplasmic. A helical membrane pass occupies residues 14 to 34 (RFAQAVTGLFLLFFLGVHLYV). At 35 to 59 (AHIDFGHPVAFFSSVINQLHNPWWL) the chain is on the extracellular side. The chain crosses the membrane as a helical span at residues 60-81 (AFFLIFVYIITYHGINGLNHIV). H72 serves as a coordination point for heme. At 82 to 91 (ADTSISEKAK) the chain is on the cytoplasmic side. Residues 92–116 (RNIGIALMVIYVITIIYGTILALLV) form a helical membrane-spanning segment.

As to quaternary structure, part of an enzyme complex containing four subunits: a flavoprotein, an iron-sulfur protein, plus two membrane-anchoring proteins, SdhC and SdhD. It depends on heme as a cofactor.

The protein resides in the cell membrane. It functions in the pathway carbohydrate metabolism; tricarboxylic acid cycle. Functionally, membrane-anchoring subunit of succinate dehydrogenase (SDH). The sequence is that of Succinate dehydrogenase hydrophobic membrane anchor subunit (sdhD) from Thermoplasma acidophilum (strain ATCC 25905 / DSM 1728 / JCM 9062 / NBRC 15155 / AMRC-C165).